The primary structure comprises 236 residues: Glyoxalase 3 (236 aa).

Residues Cys136, His137, and Glu168 contribute to the active site. The residue at position 136 (Cys136) is a Cysteine sulfinic acid (-SO2H).

It belongs to the peptidase C56 family. HSP31-like subfamily. Monomer.

It catalyses the reaction methylglyoxal + H2O = (R)-lactate + H(+). Its function is as follows. Catalyzes the conversion of methylglyoxal (MG) to D-lactate in a single glutathione (GSH)-independent step. Selective for MG, does not use glyoxal as substrate. Plays a role in detoxifying endogenously produced MG, particularly when glycerol is the principal carbon source. Important for viability in stationary phase. The polypeptide is Glyoxalase 3 (Candida albicans (strain SC5314 / ATCC MYA-2876) (Yeast)).